A 278-amino-acid chain; its full sequence is E3 ubiquitin-protein ligase MARCHF5 (278 aa).

The segment at 6–75 adopts an RING-CH-type zinc-finger fold; it reads LQQMLDRSCW…PQCNAEYLIV (70 aa). The Zn(2+) site is built by C14, C17, C33, C35, H43, C46, C65, and C68. 4 helical membrane-spanning segments follow: residues 99 to 119, 139 to 159, 209 to 229, and 238 to 258; these read FAAA…YGAV, PLFL…GKMI, ILCG…LMFS, and TILG…YFKQ.

As to quaternary structure, monomer and homodimer. Interacts with MFN1, MFN2, DNM1L and FIS1. Post-translationally, autoubiquitinated leading to degradation (short half-life).

It is found in the mitochondrion outer membrane. The enzyme catalyses S-ubiquitinyl-[E2 ubiquitin-conjugating enzyme]-L-cysteine + [acceptor protein]-L-lysine = [E2 ubiquitin-conjugating enzyme]-L-cysteine + N(6)-ubiquitinyl-[acceptor protein]-L-lysine.. The protein operates within protein modification; protein ubiquitination. In terms of biological role, mitochondrial E3 ubiquitin-protein ligase that plays a crucial role in the control of mitochondrial morphology by acting as a positive regulator of mitochondrial fission and as an important regulator of immune response. Plays a crucial role in maintaining mitochondrial homeostasis by regulating the dynamics of mitochondria through the ubiquitination of key proteins involved in fission and fusion such as FIS1, DNM1L and MFN1. Acts as a critical determinant of mitotic apoptosis through both MCL1-dependent and -independent pathways. Turns off persistent immune signaling by degrading oligomeric complexes of retinoic acid-inducible gene I/DDX58 and mitochondrial antiviral-signaling protein/MAVS formed upon RNA virus infection. Promotes STING-mediated type-I interferon production via 'Lys-63'-linked ubiquitination of STING1 thereby preserving its activity and preventing the formation of inactive STING1 polymers. Plays also an essential role in the formation of PEX3-containing vesicles in the de novo biogenesis of peroxisomes from mitochondria. Acts as a regulator of NLRP3 inflammasome activation on the mitochondria by mediating the 'Lys-27'-linked polyubiquitination of NLRP3, positively regulating the NLRP3-NEK7 complex formation and NLRP3 oligomerization. This Bos taurus (Bovine) protein is E3 ubiquitin-protein ligase MARCHF5 (MARCHF5).